Consider the following 405-residue polypeptide: 8-amino-7-oxononanoate synthase 1 (405 aa).

Residue R29 coordinates substrate. Residue 116-117 participates in pyridoxal 5'-phosphate binding; sequence GY. H141 contributes to the substrate binding site. S187, H215, and T247 together coordinate pyridoxal 5'-phosphate. The residue at position 250 (K250) is an N6-(pyridoxal phosphate)lysine. Residue T368 participates in substrate binding.

This sequence belongs to the class-II pyridoxal-phosphate-dependent aminotransferase family. BioF subfamily. In terms of assembly, homodimer. The cofactor is pyridoxal 5'-phosphate.

It carries out the reaction 6-carboxyhexanoyl-[ACP] + L-alanine + H(+) = (8S)-8-amino-7-oxononanoate + holo-[ACP] + CO2. It functions in the pathway cofactor biosynthesis; biotin biosynthesis. Functionally, catalyzes the decarboxylative condensation of pimeloyl-[acyl-carrier protein] and L-alanine to produce 8-amino-7-oxononanoate (AON), [acyl-carrier protein], and carbon dioxide. This is 8-amino-7-oxononanoate synthase 1 from Polaromonas sp. (strain JS666 / ATCC BAA-500).